Reading from the N-terminus, the 354-residue chain is Nucleoporin seh1 (354 aa).

WD repeat units follow at residues 10–49, 55–96, 112–153, 161–209, 216–259, and 270–309; these read DHKDVIHDVVFDYYGRRMATCSSDQTVKIWDEDGQGKWNV, AHSG…KVSS, DSRT…NLSQ, SNKL…RKCV, DITD…TDIS, and EHNCPVWRVCWNMLATMLISTGDDGCVRLWRMNYNRQWRC.

Belongs to the WD repeat SEC13 family. In terms of assembly, probable component of the nuclear pore complex (NPC). Component of the GATOR complex consisting of mio, Nup44A/Seh1, Im11, Nplr3, Nplr2, Wdr24, Wdr59 and Sec13. Within the GATOR complex, probable component of the GATOR2 subcomplex which is likely composed of mio, Nup44A/Seh1, Wdr24, Wdr59 and Sec13. Interacts with mio. Interacts with Wdr24. The GATOR2 complex associates with unmet in the absence of S-adenosyl-L-methionine; the mio-Wdr24-Nup44A subcomplex is essential and sufficient for this interaction while Wdr59 and Sec13 are dispensable. This association acts as a nutrient sensor to inhibit mTORC1 signaling in the absence of methionine. As to expression, expressed in ovarian cysts.

Its subcellular location is the nucleus envelope. The protein localises to the lysosome. Its function is as follows. Probable component of the nuclear pore complex (NPC). Involved in maintaining the localization of another nucleoporin Mgtor to the nuclear envelope of early meiotic female germline cells. It is not involved in recruiting the nucleoporins Mgtor, Nup107, Nup153 and FG-containing nucleoporins to the NPC. In terms of biological role, an essential component of the GATOR subcomplex GATOR2 which functions as an activator of the amino acid-sensing branch of the mTORC1 signaling pathway. The two GATOR subcomplexes, GATOR1 and GATOR2, regulate the mTORC1 pathway in order to mediate metabolic homeostasis, female gametogenesis and the response to amino acid limitation and complete starvation. GATOR2 activates the mTORC1 signaling pathway through the inhibition of the GATOR1 subcomplex, controlling the switch to cell proliferation growth under nutrient replete conditions and growth during female oocyte development. This component is required for activating mTORC1 specifically in germline cells to promote cell growth and maintain the oocyte fate, probably influences the organization and/or function of microtubules within ovarian cysts, and promotes accumulation of another GATOR2 complex member mio in germline and somatic tissues. GATOR1 and GATOR2 act at different stages of oogenesis to regulate mTORC1 in order to control meiotic entry and promote oocyte growth and development. After exactly four mitotic cyst divisions, the GATOR1 complex members (Iml1, Nprl2 and Nprl3) down-regulate mTORC1 to slow cellular metabolism and promote the mitotic/meiotic transition. At later stages of oogenesis, the mio and Nup44A components of the GATOR2 complex inhibit GATOR1 and thus activate mTORC1 to promote meiotic progression, and drive oocyte growth and development. In addition to its role in the regulation of the mTORC1 complex, functions independently of mTORC1 to prevent the inappropriate accumulation of autolysosomes in germline tissues. The polypeptide is Nucleoporin seh1 (Drosophila melanogaster (Fruit fly)).